Reading from the N-terminus, the 1203-residue chain is Regulator of telomere elongation helicase 1 (1203 aa).

The 290-residue stretch at 7–296 folds into the Helicase ATP-binding domain; it reads NGVTVDFPFQ…ARVTQQGELQ (290 aa). ATP is bound at residue 42-49; it reads SPTGTGKT. [4Fe-4S] cluster contacts are provided by C145, C163, C172, and C207. The Nuclear localization signal signature appears at 151-167; sequence KKQESNHMQISLCRKKV. A DEAH box motif is present at residues 250-253; sequence DEAH. Residues 871 to 877 carry the Nuclear localization signal motif; the sequence is QKGGRKK. 2 disordered regions span residues 998 to 1020 and 1120 to 1203; these read QLDPGQHLNQGQPHLSAHPTSKG and TTGK…RSKQ. Residues 1004 to 1020 are compositionally biased toward polar residues; that stretch reads HLNQGQPHLSAHPTSKG. Residues 1123-1134 show a composition bias toward basic and acidic residues; sequence KDLELEGPRDES. The PIP-box signature appears at 1160 to 1167; sequence QSKISSFF. The segment covering 1169 to 1181 has biased composition (basic and acidic residues); sequence QRPDESVRSDDTT.

It belongs to the helicase family. RAD3/XPD subfamily. In terms of assembly, interacts with TERF1. Interacts (via PIP-box) with PCNA; the interaction is direct and essential for suppressing telomere fragility. Interacts with MMS19; the interaction mediates the association of RTEL1 with the cytosolic iron-sulfur protein assembly (CIA) complex. In terms of tissue distribution, widely expressed. Expressed in spleen, thymus, Peyer patches, kidney, and intestine. Not expressed in brain, heart, lung, skeletal muscles, skin and white fat. In the adult gonad, it is highly expressed in the testis, mainly in the spermatogonia and meiotic spermatocytes.

It localises to the nucleus. It carries out the reaction ATP + H2O = ADP + phosphate + H(+). In terms of biological role, a probable ATP-dependent DNA helicase implicated in telomere-length regulation, DNA repair and the maintenance of genomic stability. Acts as an anti-recombinase to counteract toxic recombination and limit crossover during meiosis. Regulates meiotic recombination and crossover homeostasis by physically dissociating strand invasion events and thereby promotes noncrossover repair by meiotic synthesis dependent strand annealing (SDSA) as well as disassembly of D loop recombination intermediates. Also disassembles T loops and prevents telomere fragility by counteracting telomeric G4-DNA structures, which together ensure the dynamics and stability of the telomere. In Mus musculus (Mouse), this protein is Regulator of telomere elongation helicase 1.